The sequence spans 520 residues: Beta-glucosidase 45 (520 aa).

The N-terminal stretch at 1 to 22 is a signal peptide; that stretch reads MKNLTSFVIVILLQSLLFHVYG. Residue N3 is glycosylated (N-linked (GlcNAc...) asparagine). Residues Q52, H155, and 200 to 201 contribute to the a beta-D-glucoside site; that span reads NE. Residue E201 is the Proton donor of the active site. A disulfide bridge links C220 with C227. N-linked (GlcNAc...) asparagine glycosylation occurs at N226. Y344 provides a ligand contact to a beta-D-glucoside. A disulfide bridge links C352 with C357. An N-linked (GlcNAc...) asparagine glycan is attached at N378. E417 is an a beta-D-glucoside binding site. Catalysis depends on E417, which acts as the Nucleophile. N-linked (GlcNAc...) asparagine glycosylation is present at N435. A beta-D-glucoside contacts are provided by residues W466, 473 to 474, and F482; that span reads EW.

It belongs to the glycosyl hydrolase 1 family. Expressed in stems and siliques.

It catalyses the reaction Hydrolysis of terminal, non-reducing beta-D-glucosyl residues with release of beta-D-glucose.. Its function is as follows. Hydrolyzes p-nitrophenyl beta-D-glucoside and natural glucosides such as syringin, coniferin and p-coumaryl alcohol glucoside. May be involved in lignification by hydrolyzing monolignol glucosides. The polypeptide is Beta-glucosidase 45 (Arabidopsis thaliana (Mouse-ear cress)).